The following is a 998-amino-acid chain: Poly [ADP-ribose] polymerase 1 (998 aa).

2 consecutive PARP-type zinc fingers follow at residues 1 to 78 (AKSG…ETGG) and 99 to 189 (FAAE…PAVK). Zn(2+) is bound by residues C8, C11, H40, C43, C111, C114, H145, and C148. The tract at residues 185–211 (LPAVKNEGKRKADEVDGHSAATKKKIK) is disordered. The segment covering 190–201 (NEGKRKADEVDG) has biased composition (basic and acidic residues). Short sequence motifs (nuclear localization signal) lie at residues 193–195 (KRK) and 207–212 (KKKIKK). In terms of domain architecture, PADR1 zinc-binding spans 211–345 (KKEKEKESKL…FKRHDRAFPP (135 aa)). Residues 276–318 (GALLPCEECSGQFVFKGDAYYCTGDLSAWTKCVAKTQTPNRKD) form a zinc ribbon region. The Zn(2+) site is built by C281, C284, C297, and C307. Residues 348–361 (APTPISPPAAPEPK) show a composition bias toward pro residues. The interval 348 to 370 (APTPISPPAAPEPKPTVEETFPE) is disordered. The interval 357–507 (APEPKPTVEE…GSNKSEKKMK (151 aa)) is automodification domain. Positions 369–460 (PEGKPLTNTK…SVQELLSQFG (92 aa)) constitute a BRCT domain. E391, E397, E419, E428, E429, E445, E447, E454, E467, E471, E477, E495, E496, and E503 each carry polyADP-ribosyl glutamic acid. Positions 471 to 510 (EAVQPTEKQPSSGPVAGKSSGKVKEEKGSNKSEKKMKLTV) are disordered. Positions 492–506 (KVKEEKGSNKSEKKM) are enriched in basic and acidic residues. The 97-residue stretch at 525–621 (SCHVLETGGK…PNFTKYPKKF (97 aa)) folds into the WGR domain. The PARP alpha-helical domain maps to 645–762 (KSKLAKPVQE…DIEVAYSLLR (118 aa)). The region spanning 771–997 (DPIDVKYEKI…LKFNYKGGMM (227 aa)) is the PARP catalytic domain. NAD(+)-binding positions include 845–847 (HGS), G854, R861, and S887. Catalysis depends on E971, which acts as the For poly [ADP-ribose] polymerase activity.

It belongs to the ARTD/PARP family. As to quaternary structure, homodimer; PARP-type zinc-fingers from separate parp1 molecules form a dimer module that specifically recognizes DNA strand breaks. In terms of processing, poly-ADP-ribosylated on serine, glutamate and aspartate residues by autocatalysis. Auto-ADP-ribosylation on serine takes place following interaction with HPF1. Auto poly-ADP-ribosylation on serine residues promotes its dissociation from chromatin.

It localises to the chromosome. The protein localises to the nucleus. Its subcellular location is the nucleolus. It is found in the cytoplasm. The protein resides in the cytosol. It carries out the reaction NAD(+) + (ADP-D-ribosyl)n-acceptor = nicotinamide + (ADP-D-ribosyl)n+1-acceptor + H(+).. The enzyme catalyses L-seryl-[protein] + NAD(+) = O-(ADP-D-ribosyl)-L-seryl-[protein] + nicotinamide + H(+). The catalysed reaction is L-aspartyl-[protein] + NAD(+) = 4-O-(ADP-D-ribosyl)-L-aspartyl-[protein] + nicotinamide. It catalyses the reaction L-glutamyl-[protein] + NAD(+) = 5-O-(ADP-D-ribosyl)-L-glutamyl-[protein] + nicotinamide. It carries out the reaction L-tyrosyl-[protein] + NAD(+) = O-(ADP-D-ribosyl)-L-tyrosyl-[protein] + nicotinamide + H(+). The enzyme catalyses L-histidyl-[protein] + NAD(+) = N(tele)-(ADP-D-ribosyl)-L-histidyl-[protein] + nicotinamide + H(+). ADP-ribosyltransferase activity is regulated via an allosteric activation mechanism. In absence of activation signal, parp1 is autoinhibited by the PARP alpha-helical domain (also named HD region), which prevents effective NAD(+)-binding. Activity is highly stimulated by signals, such as DNA strand breaks. Binding to damaged DNA unfolds the PARP alpha-helical domain, relieving autoinhibition. Poly-ADP-ribosyltransferase activity is tightly regulated and parp1 is removed from damaged chromatin following initial poly-ADP-ribosylation of chromatin to avoid prolonged residence (trapping) that has cytotoxic consequences. A number of factors or post-translational modifications (auto-poly-ADP-ribosylation) promote parp1 removal from chromatin. Poly-ADP-ribosyltransferase that mediates poly-ADP-ribosylation of proteins and plays a key role in DNA repair. Mediates glutamate, aspartate, serine, histidine or tyrosine ADP-ribosylation of proteins: the ADP-D-ribosyl group of NAD(+) is transferred to the acceptor carboxyl group of target residues and further ADP-ribosyl groups are transferred to the 2'-position of the terminal adenosine moiety, building up a polymer with an average chain length of 20-30 units. Serine ADP-ribosylation of proteins constitutes the primary form of ADP-ribosylation of proteins in response to DNA damage. Specificity for the different amino acids is conferred by interacting factors, such as hpf1 and nmnat1. Following interaction with hpf1, catalyzes serine ADP-ribosylation of target proteins; hpf1 confers serine specificity by completing the parp1 active site. Also catalyzes tyrosine ADP-ribosylation of target proteins following interaction with hpf1. Following interaction with nmnat1, catalyzes glutamate and aspartate ADP-ribosylation of target proteins; nmnat1 confers glutamate and aspartate specificity. Parp1 initiates the repair of DNA breaks: recognizes and binds DNA breaks within chromatin and recruits hpf1, licensing serine ADP-ribosylation of target proteins, such as histones (H2BS6ADPr and H3S10ADPr), thereby promoting decompaction of chromatin and the recruitment of repair factors leading to the reparation of DNA strand breaks. In addition to base excision repair (BER) pathway, also involved in double-strand breaks (DSBs) repair. Mediates the poly-ADP-ribosylation of a number of proteins. In addition to proteins, also able to ADP-ribosylate DNA: catalyzes ADP-ribosylation of DNA strand break termini containing terminal phosphates and a 2'-OH group in single- and double-stranded DNA, respectively. Parp1-mediated DNA repair in neurons plays a role in sleep: senses DNA damage in neurons and promotes sleep, facilitating efficient DNA repair. In addition to DNA repair, also involved in other processes, such as transcription regulation, programmed cell death, membrane repair, adipogenesis and innate immunity. Acts as a repressor of transcription: binds to nucleosomes and modulates chromatin structure in a manner similar to histone H1, thereby altering RNA polymerase II. Acts both as a positive and negative regulator of transcription elongation, depending on the context. Poly-ADP-ribose chains generated by parp1 also play a role in poly-ADP-ribose-dependent cell death, a process named parthanatos. Also acts as a negative regulator of the cGAS-STING pathway by mediating poly-ADP-ribosylation and inactivation of cgas. Acts as a negative regulator of adipogenesis by catalyzing poly ADP-ribosylation of histone H2B on 'Glu-35' (H2BE35ADPr). This chain is Poly [ADP-ribose] polymerase 1 (parp1), found in Xenopus laevis (African clawed frog).